A 1369-amino-acid chain; its full sequence is Microtubule-associated tumor suppressor candidate 2 (1369 aa).

Disordered stretches follow at residues 180 to 262 (ASSS…TQTV), 374 to 442 (GRGN…FIPN), 477 to 509 (GENK…VAEN), 582 to 627 (NTSP…EERT), 791 to 839 (RSSA…LRPP), 861 to 992 (SSVS…QARE), and 1331 to 1369 (WKLQ…TTPR). Composition is skewed to polar residues over residues 246–262 (PSTS…TQTV) and 392–401 (LHTTPKQGSA). Residues 641-980 (RPKIITYIRR…PKQRTAAARN (340 aa)) form a mediates interaction with MAPRE1 region. Positions 801-890 (GPITTATSLY…TRSTFGNEEQ (90 aa)) are sufficient for interaction with KIF2C. Residues 801–1150 (GPITTATSLY…HDAALLEMEN (350 aa)) are localization to the growing distal tip of microtubules. Polar residues predominate over residues 804–814 (TTATSLYSSDP). Residues 821-834 (ASSSNAAKSNLPKS) are compositionally biased toward low complexity. Basic and acidic residues predominate over residues 937–947 (TKKDAQKDQDT). Residues 991 to 1335 (REAERQLVLR…NEELLWKLQT (345 aa)) are a coiled coil. Over residues 1348 to 1369 (SPVYRGSSSGPSSPARVSTTPR) the composition is skewed to low complexity.

In the C-terminal section; belongs to the MTUS1 family. As to quaternary structure, homodimer. Interacts with KIF2C and MAPRE1; the interaction is direct and probably targets MTUS2 and KIF2C to microtubules. In terms of tissue distribution, detected in embryonic stem cells differentiating to cardiomyocytes.

Its subcellular location is the cytoplasm. It localises to the cytoskeleton. In terms of biological role, binds microtubules. Together with MAPRE1 may target the microtubule depolymerase KIF2C to the plus-end of microtubules. May regulate the dynamics of microtubules at their growing distal tip. The sequence is that of Microtubule-associated tumor suppressor candidate 2 (MTUS2) from Homo sapiens (Human).